The following is a 378-amino-acid chain: Forkhead box protein F1 (378 aa).

The segment at 1–45 is disordered; the sequence is MSAPDKQQPPHGGGTGGGGGAGGQAMDPAAAGPTKAKKTNAGVRR. Over residues 11 to 23 the composition is skewed to gly residues; sequence HGGGTGGGGGAGG. A compositionally biased stretch (low complexity) spans 24–42; that stretch reads QAMDPAAAGPTKAKKTNAG. Residues 47–138 constitute a DNA-binding region (fork-head); the sequence is EKPPYSYIAL…EFMFEEGSFR (92 aa).

Expressed primarily in lung in alveolar type II pneumocyte cells, and to a lesser extent in placenta, stomach, intestine and colon.

The protein localises to the nucleus. In terms of biological role, probable transcription activator for a number of lung-specific genes. In Mus musculus (Mouse), this protein is Forkhead box protein F1 (Foxf1).